Here is a 374-residue protein sequence, read N- to C-terminus: Histidinol-phosphate aminotransferase (374 aa).

Lys211 is modified (N6-(pyridoxal phosphate)lysine). The span at 351–368 shows a compositional bias: low complexity; it reads GNSSQDSASKSNSSANND. The segment at 351-374 is disordered; that stretch reads GNSSQDSASKSNSSANNDELNASN.

This sequence belongs to the class-II pyridoxal-phosphate-dependent aminotransferase family. Histidinol-phosphate aminotransferase subfamily. Homodimer. It depends on pyridoxal 5'-phosphate as a cofactor.

It catalyses the reaction L-histidinol phosphate + 2-oxoglutarate = 3-(imidazol-4-yl)-2-oxopropyl phosphate + L-glutamate. Its pathway is amino-acid biosynthesis; L-histidine biosynthesis; L-histidine from 5-phospho-alpha-D-ribose 1-diphosphate: step 7/9. This is Histidinol-phosphate aminotransferase from Photobacterium profundum (strain SS9).